The following is a 183-amino-acid chain: MKKKTSLSEEDQSLFRQLMSGTRQIAQDTIVHRPIRKKVTEVPVKRLLQEQADNSHYFSDEFQPLLNTQGAVKYVREDVSHFELKKLRRGDYSPELFLDLHGLTQMQAKQELGALIAACRREHVFCTCVMHGHGKHILKQQTPLWLAQHPHVMAFHQAPKEYGGDAALLVLIEIEEWQPPELP.

In terms of domain architecture, Smr spans 98-173; that stretch reads LDLHGLTQMQ…GDAALLVLIE (76 aa).

This sequence belongs to the SmrB family. As to quaternary structure, associates with collided ribosomes, but not with correctly translating polysomes.

Its function is as follows. Acts as a ribosome collision sensor. Detects stalled/collided disomes (pairs of ribosomes where the leading ribosome is stalled and a second ribosome has collided with it) and endonucleolytically cleaves mRNA at the 5' boundary of the stalled ribosome. Stalled/collided disomes form a new interface (primarily via the 30S subunits) that binds SmrB. Cleaved mRNA becomes available for tmRNA ligation, leading to ribosomal subunit dissociation and rescue of stalled ribosomes. This chain is Ribosome rescue factor SmrB, found in Enterobacter sp. (strain 638).